A 223-amino-acid polypeptide reads, in one-letter code: Thymidylate kinase (223 aa).

7–14 serves as a coordination point for ATP; that stretch reads GIDGAGKS.

It belongs to the thymidylate kinase family.

It catalyses the reaction dTMP + ATP = dTDP + ADP. Functionally, phosphorylation of dTMP to form dTDP in both de novo and salvage pathways of dTTP synthesis. The protein is Thymidylate kinase of Prosthecochloris aestuarii (strain DSM 271 / SK 413).